Here is a 350-residue protein sequence, read N- to C-terminus: MRASQSPMLDPRARQLLRTLIARYIRDGEPVGSKTLAQHAGLDVSPATIRNILADLEDVGLLSSPHTSAGRVPTAHGYRVFVDSLVQMQPPGEEEVRRLRAELASGNGTQSLLGSASQMLSAMSHFVGVVSAPRREQFAFRHIDFVALDARRVLAILVFADNEVQNRVIEPRRAYEPAELERVANYLNAQFAGRALADIRACLLRELRMAKSEMEQLLAHSVELASEALVPADADDMVMAGQTRLMGVQDLSDLDRLRELFEAFASKREILQLLERTIQAPGVRIFIGEETGMVSLEDVSLVTAPYAANGQVLGVLGVIGPKRMAYDRLIPLVQTAADVLGAAMQSPGAR.

Belongs to the HrcA family.

In terms of biological role, negative regulator of class I heat shock genes (grpE-dnaK-dnaJ and groELS operons). Prevents heat-shock induction of these operons. The sequence is that of Heat-inducible transcription repressor HrcA from Xanthomonas axonopodis pv. citri (strain 306).